Here is a 130-residue protein sequence, read N- to C-terminus: Small ribosomal subunit protein uS9 (130 aa).

Belongs to the universal ribosomal protein uS9 family.

The polypeptide is Small ribosomal subunit protein uS9 (Pasteurella multocida (strain Pm70)).